Here is a 440-residue protein sequence, read N- to C-terminus: Frizzled/smoothened-like sans CRD protein D (440 aa).

Residues 1–27 form the signal peptide; sequence MFIILKFLISFFLICNFFNYNDHFASG. Topologically, residues 28–85 are extracellular; it reads QTLPPGFCPSPLIYRNSTNRQNDIENGYLFIGQTNCTSPCPSLIFSENEWHRVYNMSL. N-linked (GlcNAc...) asparagine glycans are attached at residues Asn-43, Asn-62, and Asn-82. The helical transmembrane segment at 86–106 threads the bilayer; it reads IAGTISMFALIFLIITYSPLV. Topologically, residues 107-110 are cytoplasmic; the sequence is NKYN. The chain crosses the membrane as a helical span at residues 111–131; it reads GYTRHTVGILFLFCGIFLTVT. At 132–162 the chain is on the extracellular side; the sequence is TDGRQLWDIDLGFEKYCPEPGRFARQSDTKC. The helical transmembrane segment at 163–183 threads the bilayer; it reads LVTAIFFQYGCVTSILWWAAI. The Cytoplasmic segment spans residues 184–200; sequence SVDLWMTIRKVKISKLQ. The chain crosses the membrane as a helical span at residues 201–221; it reads FITYAVILNIITLILTFAPIA. Residues 222 to 244 are Extracellular-facing; the sequence is SKQYGYGEAAIGCWLMDLKYQVG. Residues 245-265 traverse the membrane as a helical segment; the sequence is YFWAPVGFCLCVGCVSIVLII. The Cytoplasmic segment spans residues 266-285; sequence REIYKVSDAIKKKLLAKHLK. The chain crosses the membrane as a helical span at residues 286–306; that stretch reads PLMLIILMLSEFIYMFIFYSY. Over 307–346 the chain is Extracellular; that stretch reads TTSRRGHYHDVVEKYIRCLFINASNPSICEVDVSISSPAH. An N-linked (GlcNAc...) asparagine glycan is attached at Asn-328. A helical membrane pass occupies residues 347-367; the sequence is FFFHFCMRLMGIEGLIFFGFT. At 368–440 the chain is on the cytoplasmic side; it reads RQTKRIWLRS…IELSGVDSKN (73 aa). Residues 395-428 form a disordered region; it reads ISSDEKTSNSSHRTTRGCRETEFGESIEQSNDPE.

The protein belongs to the G-protein coupled receptor Fz/Smo family.

Its subcellular location is the membrane. This Dictyostelium discoideum (Social amoeba) protein is Frizzled/smoothened-like sans CRD protein D (fscD).